The chain runs to 278 residues: uncharacterized protein (278 aa).

Belongs to the short-chain dehydrogenases/reductases (SDR) family.

This is an uncharacterized protein from Bacillus subtilis (strain 168).